The chain runs to 313 residues: MEKIKVIFCGTPQIGADILTTLTEMENVEVVLVISQPDRPVGRKKELKPTPVKEIALKNNLKIIQPVKISEAYEEIAQIESDFIVTCAYGQFVPTKILDLPKIDSINVHGSLLPKYRGGAPIQYAIKNGDSKTGISIMKMVKKMDAGDYYIQESIDIEETDDTGIMFEKLAKLGQKMIKENLLKIYNNELPPIAQNEDEVTFSKNISTEEEKINWNDLSVNVWNHIRSLSPWPIAHTFKGEERYKIQKVQILNNNVEAKPGTIVNISENGIDIQTKDGQVQILLIQKPGKKMMEASSYKLNNLSDLKVGDCFE.

111 to 114 contacts (6S)-5,6,7,8-tetrahydrofolate; sequence SLLP.

It belongs to the Fmt family.

It catalyses the reaction L-methionyl-tRNA(fMet) + (6R)-10-formyltetrahydrofolate = N-formyl-L-methionyl-tRNA(fMet) + (6S)-5,6,7,8-tetrahydrofolate + H(+). Attaches a formyl group to the free amino group of methionyl-tRNA(fMet). The formyl group appears to play a dual role in the initiator identity of N-formylmethionyl-tRNA by promoting its recognition by IF2 and preventing the misappropriation of this tRNA by the elongation apparatus. The polypeptide is Methionyl-tRNA formyltransferase (Mesoplasma florum (strain ATCC 33453 / NBRC 100688 / NCTC 11704 / L1) (Acholeplasma florum)).